Consider the following 698-residue polypeptide: Elongation factor G 2 (698 aa).

The tr-type G domain maps to E8 to V290. GTP-binding positions include A17–T24, D88–H92, and N142–D145.

This sequence belongs to the TRAFAC class translation factor GTPase superfamily. Classic translation factor GTPase family. EF-G/EF-2 subfamily.

It is found in the cytoplasm. Functionally, catalyzes the GTP-dependent ribosomal translocation step during translation elongation. During this step, the ribosome changes from the pre-translocational (PRE) to the post-translocational (POST) state as the newly formed A-site-bound peptidyl-tRNA and P-site-bound deacylated tRNA move to the P and E sites, respectively. Catalyzes the coordinated movement of the two tRNA molecules, the mRNA and conformational changes in the ribosome. In Methylococcus capsulatus (strain ATCC 33009 / NCIMB 11132 / Bath), this protein is Elongation factor G 2.